The following is a 377-amino-acid chain: Short chain dehydrogenase gsfE (377 aa).

NADP(+) contacts are provided by aspartate 89, glutamine 121, tyrosine 226, alanine 266, and serine 268. Tyrosine 226 acts as the Proton donor in catalysis.

It belongs to the short-chain dehydrogenases/reductases (SDR) family. Highly divergent.

The catalysed reaction is dehydrogriseofulvin + NADPH + H(+) = griseofulvin + NADP(+). The protein operates within secondary metabolite biosynthesis; terpenoid biosynthesis. Functionally, short chain dehydrogenase; part of the gene cluster that mediates the biosynthesis of griseofulvin, an important antifungal drug that has been in use for a long time for treating dermatophyte infections. The first step of the pathway is the formation of the heptaketide backbone by gsfA which is initiated by priming with acetyl-CoA, followed by sequential condensations of 6 malonyl-CoA units. The resulting benzophenone can undergo a spontaneous dehydration to form norlichexanthone. However, the true precursor for the griseofulvin biosynthesis is not norlichexanthone, but the heptaketide benzophenone that is O-methylated at 3-OH by gsfB to produce griseophenone D which is further methylated at 9-OH by gsfC to yield griseophenone C. Griseophenone C is then substrate of halogenase gsfI which is responsible for the regio-specific chlorination at the C13 position to form griseophenone B. The cytochrome P450 gsfF catalyzes the coupling of orcinol and phloroglucinol rings in griseophenone B to form desmethyl-dehydrogriseofulvin A which is further methylated at 5-OH by gsfD to yield dehydrogriseofulvin. Finally, gsfE performs stereospecific reduction of enone 18 of dehydrogriseofulvin to afford the final product griseofulvin. The sequence is that of Short chain dehydrogenase gsfE from Penicillium aethiopicum.